A 189-amino-acid polypeptide reads, in one-letter code: MSLISRLRAVVAGDDYLDGDFDELDYETGDDFDTGNDGGGNYSSGLAALSNANPFNNRGGSSKVIGMPGISTAAAEVSLMEPRSFDEMPKAIQALRERKTVILNLTMMEPDQAQRAVDFVAGGTFAIDGHQERVGESIFLFAPSCVTVTNSFQEEPSPSSVMNKDNEGPVSESVMAPEPAWGASVPSAI.

The span at 152–163 shows a compositional bias: polar residues; that stretch reads FQEEPSPSSVMN. Residues 152 to 189 form a disordered region; that stretch reads FQEEPSPSSVMNKDNEGPVSESVMAPEPAWGASVPSAI.

Belongs to the SepF family. Homodimer. Interacts with FtsZ.

It localises to the cytoplasm. Its function is as follows. Cell division protein that is part of the divisome complex and is recruited early to the Z-ring. Probably stimulates Z-ring formation, perhaps through the cross-linking of FtsZ protofilaments. Its function overlaps with FtsA. In Prochlorococcus marinus (strain SARG / CCMP1375 / SS120), this protein is Cell division protein SepF.